A 1673-amino-acid chain; its full sequence is Protein-methionine sulfoxide oxidase mical3b (1673 aa).

Residues 2-492 (WDGQSEMCQA…RHLIDTGEGP (491 aa)) form a monooxygenase domain region. FAD contacts are provided by residues Cys-96, 96-124 (CGLR…SRNN), Glu-115, Arg-117, Arg-122, Asn-124, and Asp-396. A Calponin-homology (CH) domain is found at 512–618 (MARYSKLLSW…YLSQLHELLK (107 aa)). Positions 647–714 (SKLGQSLSRK…PKASEGHSKV (68 aa)) are disordered. Positions 661–671 (DKKEKEADSVG) are enriched in basic and acidic residues. An LIM zinc-binding domain is found at 791–853 (DVCYFCGRRV…KHHFSFRLAS (63 aa)). Residues 882 to 892 (LSSLGSVGTAT) show a composition bias toward low complexity. Disordered stretches follow at residues 882 to 901 (LSSL…SSTH), 918 to 938 (RIEL…LQEV), 951 to 1100 (SLQE…KRSE), 1159 to 1188 (QSAR…TDGD), and 1357 to 1393 (GPDA…RETG). Positions 973-992 (LVWKKGEELHARTNGERKLD) are enriched in basic and acidic residues. Composition is skewed to acidic residues over residues 993 to 1002 (LEEELKEEEG) and 1010 to 1041 (EGEE…DPDI). Over residues 1081 to 1094 (SDLTPDPSTTPESS) the composition is skewed to low complexity. Residues 1159–1182 (QSARICDSSTQTHSVTDLQETSPL) show a composition bias toward polar residues. Coiled-coil stretches lie at residues 1475–1531 (EEEL…AVEK) and 1573–1638 (QEKN…VEQR). The bMERB domain occupies 1495-1661 (KQEELRRLHR…EKEEDSDLEA (167 aa)).

Belongs to the Mical family. FAD serves as cofactor.

Its subcellular location is the cytoplasm. It localises to the cytoskeleton. The protein localises to the nucleus. The enzyme catalyses L-methionyl-[F-actin] + NADPH + O2 + H(+) = L-methionyl-(R)-S-oxide-[F-actin] + NADP(+) + H2O. Functionally, monooxygenase that promotes depolymerization of F-actin by mediating oxidation of specific methionine residues on actin. Acts by modifying actin subunits through the addition of oxygen to form methionine-sulfoxide, leading to promote actin filament severing and prevent repolymerization. Involved in exocytic vesicles tethering and fusion: the monooxygenase activity is required for this process. This chain is Protein-methionine sulfoxide oxidase mical3b (mical3b), found in Danio rerio (Zebrafish).